A 400-amino-acid polypeptide reads, in one-letter code: Phosphoglycerate kinase (400 aa).

Substrate is bound by residues 21-23, arginine 36, 59-62, arginine 118, and arginine 151; these read DFN and HLGR. ATP contacts are provided by residues lysine 201, glycine 293, glutamate 324, and 353–356; that span reads GGDS.

The protein belongs to the phosphoglycerate kinase family. Monomer.

It localises to the cytoplasm. It carries out the reaction (2R)-3-phosphoglycerate + ATP = (2R)-3-phospho-glyceroyl phosphate + ADP. The protein operates within carbohydrate degradation; glycolysis; pyruvate from D-glyceraldehyde 3-phosphate: step 2/5. The chain is Phosphoglycerate kinase from Fervidobacterium nodosum (strain ATCC 35602 / DSM 5306 / Rt17-B1).